The sequence spans 680 residues: UvrABC system protein B (680 aa).

Positions 27 to 192 (SNIEAGVTDQ…ERNDYDFHRG (166 aa)) constitute a Helicase ATP-binding domain. 40 to 47 (GVTGSGKT) provides a ligand contact to ATP. The Beta-hairpin signature appears at 93 to 116 (YYDYYQPEAYVPSSDTYIEKDSSI). Positions 432-594 (QVDDLLGECR…IVPATIRKAV (163 aa)) constitute a Helicase C-terminal domain. In terms of domain architecture, UVR spans 637–672 (AKQIQQLERDMREAAKELEFERAAELRDRIRLLREH).

Belongs to the UvrB family. In terms of assembly, forms a heterotetramer with UvrA during the search for lesions. Interacts with UvrC in an incision complex.

It localises to the cytoplasm. In terms of biological role, the UvrABC repair system catalyzes the recognition and processing of DNA lesions. A damage recognition complex composed of 2 UvrA and 2 UvrB subunits scans DNA for abnormalities. Upon binding of the UvrA(2)B(2) complex to a putative damaged site, the DNA wraps around one UvrB monomer. DNA wrap is dependent on ATP binding by UvrB and probably causes local melting of the DNA helix, facilitating insertion of UvrB beta-hairpin between the DNA strands. Then UvrB probes one DNA strand for the presence of a lesion. If a lesion is found the UvrA subunits dissociate and the UvrB-DNA preincision complex is formed. This complex is subsequently bound by UvrC and the second UvrB is released. If no lesion is found, the DNA wraps around the other UvrB subunit that will check the other stand for damage. The sequence is that of UvrABC system protein B from Nitratidesulfovibrio vulgaris (strain DSM 19637 / Miyazaki F) (Desulfovibrio vulgaris).